Reading from the N-terminus, the 388-residue chain is Xylose isomerase (388 aa).

Catalysis depends on residues His-54 and Asp-57. Mg(2+)-binding residues include Glu-181, Glu-217, His-220, Asp-245, Asp-255, Asp-257, and Asp-287.

It belongs to the xylose isomerase family. As to quaternary structure, homotetramer. It depends on Mg(2+) as a cofactor.

Its subcellular location is the cytoplasm. It catalyses the reaction alpha-D-xylose = alpha-D-xylulofuranose. The protein is Xylose isomerase of Streptomyces corchorusii (Streptomyces chibaensis).